The primary structure comprises 175 residues: UPF0398 protein SPD_0338 (175 aa).

This sequence belongs to the UPF0398 family.

The sequence is that of UPF0398 protein SPD_0338 from Streptococcus pneumoniae serotype 2 (strain D39 / NCTC 7466).